The sequence spans 600 residues: NADH-quinone oxidoreductase subunit C/D (600 aa).

The NADH dehydrogenase I subunit C stretch occupies residues 1 to 190 (MVNNMTDLTA…SPFELTKAKQ (190 aa)). The segment at 214-600 (DFMFLNLGPN…IDFVMSDVDR (387 aa)) is NADH dehydrogenase I subunit D.

In the N-terminal section; belongs to the complex I 30 kDa subunit family. It in the C-terminal section; belongs to the complex I 49 kDa subunit family. In terms of assembly, NDH-1 is composed of 13 different subunits. Subunits NuoB, CD, E, F, and G constitute the peripheral sector of the complex.

Its subcellular location is the cell inner membrane. The enzyme catalyses a quinone + NADH + 5 H(+)(in) = a quinol + NAD(+) + 4 H(+)(out). Its function is as follows. NDH-1 shuttles electrons from NADH, via FMN and iron-sulfur (Fe-S) centers, to quinones in the respiratory chain. The immediate electron acceptor for the enzyme in this species is believed to be ubiquinone. Couples the redox reaction to proton translocation (for every two electrons transferred, four hydrogen ions are translocated across the cytoplasmic membrane), and thus conserves the redox energy in a proton gradient. This chain is NADH-quinone oxidoreductase subunit C/D, found in Escherichia coli O157:H7.